The following is a 643-amino-acid chain: MGSGDTRGESSLVAKPIEIILNKLPHAILAQQQFQKYITSPIYRYLSKLLLFREVAWPESTKDTQKGQVGIFSFQNNYADSATTFRILAHLDEQRYPLPNGAAEKNLPSLFEGFKATVSIIQQRLLLDNVDGATNSDKEKYVQLPDINTGFVNKTYSRIDLTHLLEDVETNVENLSINKTLEMDELTRLDSMINELESRKLKILERVKHIDSKSTNLENDVTLIKDRINFIEEYNLEADREQSLRKQMEEERSSEASSFTQNEEAISSLCDVESKDTRLKDFYKMPHEKSHDKNRQIISETYSRNTTAFRMTIPHGEHGNSITALDFDTPWGTLCSSSYQDRIVKVWDLNHGIQVGELPGHLATVNCMQIDKKNYNMLITGSKDATLKLWDLNLSREIYLDHSPLKEKTEEIVTPCIHNFELHKDEITALSFDSEALVSGSRDKKIFHWDLTTGKCIQQLDLIFTPTHSDIKMPARSLNNGACLLGTEAPMIGALQCYNSALATGTKDGIVRLWDLRVGKPVRLLEGHTDGITSLKFDSEKLVTGSMDNSVRIWDLRTSSILDVIAYDLPVSSLDFDGKLITVGANEGGVNVFNMERDEHWMTPEPPHSLDGDELSRRIAIVKYKDGFLINGHNDGDINVWTL.

The segment at M1–S274 is required for interaction with FIS1 and MDV1. Residues F74 to L126 form a sufficient for interaction with FIS1 region. Positions D160–E255 form a coiled coil. Residues S243 to S254 show a composition bias toward basic and acidic residues. Residues S243–N262 are disordered. 7 WD repeats span residues E317 to E357, G360 to L400, L422 to D461, N479 to E526, G527 to A566, D568 to T603, and E614 to L643.

Belongs to the WD repeat MDV1/CAF4 family. In terms of assembly, interacts with DNM1, FIS1 and MDV1, components of the mitochondrial fission machinery. Interacts via its WD repeats with DNM1. Interacts with CCR4 and NOT1, components of the CCR4-NOT complex. It is however not a component of the 1.0 MDa CCR4-NOT core complex, but appears to be part of a less characterized, 1.9 MDa CCR4-NOT complex. Interacts with DBF2, another likely component of the 1.9 MDa complex. Interacts with SRB9 and SRB10, components of the SRB8-11 complex.

The protein resides in the mitochondrion outer membrane. Functionally, involved in mitochondrial fission. Has a partially redundant function to MDV1 in acting as an adapter protein, binding to FIS1 on the mitochondrial outer membrane and recruiting the dynamin-like GTPase DNM1 to form mitochondrial fission complexes. Plays a key role in determining the polarized localization of those DNM1 clusters that are not immediately involved in the mitochondrial fission process. This is CCR4-associated factor 4 (CAF4) from Saccharomyces cerevisiae (strain ATCC 204508 / S288c) (Baker's yeast).